Consider the following 230-residue polypeptide: uncharacterized protein (230 aa).

The protein belongs to the transferase hexapeptide repeat family.

This is an uncharacterized protein from Escherichia coli O6:K15:H31 (strain 536 / UPEC).